Consider the following 24-residue polypeptide: VVAAGANPVLITRDLVNVLEDAIR.

The protein belongs to the chaperonin (HSP60) family. Oligomer of probably six alpha and six beta subunits.

It is found in the plastid. Its subcellular location is the chloroplast. Functionally, this protein binds RuBisCO small and large subunits and is implicated in the assembly of the enzyme oligomer. The sequence is that of RuBisCO large subunit-binding protein subunit beta, chloroplastic from Populus euphratica (Euphrates poplar).